The primary structure comprises 338 residues: Phosphate acyltransferase (338 aa).

Belongs to the PlsX family. Homodimer. Probably interacts with PlsY.

It is found in the cytoplasm. The catalysed reaction is a fatty acyl-[ACP] + phosphate = an acyl phosphate + holo-[ACP]. It participates in lipid metabolism; phospholipid metabolism. Functionally, catalyzes the reversible formation of acyl-phosphate (acyl-PO(4)) from acyl-[acyl-carrier-protein] (acyl-ACP). This enzyme utilizes acyl-ACP as fatty acyl donor, but not acyl-CoA. In Endomicrobium trichonymphae, this protein is Phosphate acyltransferase.